The primary structure comprises 247 residues: Probable transcriptional regulatory protein lpg1286 (247 aa).

Belongs to the TACO1 family.

The protein resides in the cytoplasm. This chain is Probable transcriptional regulatory protein lpg1286, found in Legionella pneumophila subsp. pneumophila (strain Philadelphia 1 / ATCC 33152 / DSM 7513).